Reading from the N-terminus, the 155-residue chain is Large ribosomal subunit protein uL22 (155 aa).

Positions 109–155 (HITVIVESRPPKKAGKQGASASAARARRAQASKAATKKATDSKEGSE) are disordered. Over residues 146–155 (KATDSKEGSE) the composition is skewed to basic and acidic residues.

It belongs to the universal ribosomal protein uL22 family. In terms of assembly, part of the 50S ribosomal subunit.

Functionally, this protein binds specifically to 23S rRNA; its binding is stimulated by other ribosomal proteins, e.g. L4, L17, and L20. It is important during the early stages of 50S assembly. It makes multiple contacts with different domains of the 23S rRNA in the assembled 50S subunit and ribosome. The globular domain of the protein is located near the polypeptide exit tunnel on the outside of the subunit, while an extended beta-hairpin is found that lines the wall of the exit tunnel in the center of the 70S ribosome. This is Large ribosomal subunit protein uL22 from Mycolicibacterium vanbaalenii (strain DSM 7251 / JCM 13017 / BCRC 16820 / KCTC 9966 / NRRL B-24157 / PYR-1) (Mycobacterium vanbaalenii).